A 364-amino-acid chain; its full sequence is Selenide, water dikinase (364 aa).

Sec-25 is a catalytic residue. A non-standard amino acid (selenocysteine) is located at residue Sec-25. ATP-binding positions include Lys-28, 46 to 48 (GYD), Asp-66, Asp-89, and 141 to 143 (GQT). Asp-48 contributes to the Mg(2+) binding site. Asp-89 contacts Mg(2+). Asp-244 contacts Mg(2+).

Belongs to the selenophosphate synthase 1 family. Class II subfamily. As to quaternary structure, homodimer. It depends on Mg(2+) as a cofactor.

It catalyses the reaction hydrogenselenide + ATP + H2O = selenophosphate + AMP + phosphate + 2 H(+). Functionally, synthesizes selenophosphate from selenide and ATP. The sequence is that of Selenide, water dikinase (selD) from Dictyostelium discoideum (Social amoeba).